The primary structure comprises 299 residues: Ciliary microtubule inner protein 2B (299 aa).

It belongs to the CIMIP2 family. Expressed in airway epithelial cells.

It is found in the cytoplasm. The protein localises to the cytoskeleton. It localises to the cilium axoneme. Its function is as follows. Microtubule inner protein (MIP) part of the dynein-decorated doublet microtubules (DMTs) in cilia axoneme, which is required for motile cilia beating. The chain is Ciliary microtubule inner protein 2B (cimip2b) from Danio rerio (Zebrafish).